The sequence spans 695 residues: UvrABC system protein C (695 aa).

Residues 1–10 (MNHDPAETRD) are compositionally biased toward basic and acidic residues. Positions 1–44 (MNHDPAETRDTAAAPLADTESPSPVSPELTPHPAPAAQDIDTAT) are disordered. The GIY-YIG domain maps to 88 to 166 (TSPGVYRMLN…IKQLRPRFNV (79 aa)). Residues 276–311 (RAVKQELAVEMEKASNELEFETAALYRDRLAALSAI) form the UVR domain.

It belongs to the UvrC family. As to quaternary structure, interacts with UvrB in an incision complex.

It is found in the cytoplasm. In terms of biological role, the UvrABC repair system catalyzes the recognition and processing of DNA lesions. UvrC both incises the 5' and 3' sides of the lesion. The N-terminal half is responsible for the 3' incision and the C-terminal half is responsible for the 5' incision. This is UvrABC system protein C from Rhodopseudomonas palustris (strain HaA2).